Reading from the N-terminus, the 201-residue chain is L-rhamnose-binding lectin SML (201 aa).

8 disulfides stabilise this stretch: cysteine 10/cysteine 40, cysteine 20/cysteine 99, cysteine 54/cysteine 86, cysteine 67/cysteine 73, cysteine 108/cysteine 138, cysteine 117/cysteine 195, cysteine 152/cysteine 182, and cysteine 163/cysteine 169. 2 SUEL-type lectin domains span residues 18-100 and 107-196; these read LSCD…YNCF and TCEH…YVCQ. Asparagine 168 is a glycosylation site (N-linked (GlcNAc...) asparagine).

As to quaternary structure, homodimer; non-covalently linked.

Rhamnose-binding lectin. Also binds melibiose, raffinose, D-galactose, L-arabinose, D-fucose, maltose and D-glucose with decreasing affinity. Does not bind D-arabinose, L-fucose, lactose, xylose or 2-deoxy-D-galactose. Shows strong hemagglutinating activity against rabbit erythrocytes. In Scomberomorus niphonius (Japanese Spanish mackerel), this protein is L-rhamnose-binding lectin SML.